The sequence spans 432 residues: Enolase (432 aa).

Positions 41-64 (QVPSGASTGSFEAHELRDGDPKRY) are disordered. The segment covering 52 to 64 (EAHELRDGDPKRY) has biased composition (basic and acidic residues). Gln-168 contacts (2R)-2-phosphoglycerate. Residue Glu-211 is the Proton donor of the active site. Residues Asp-248, Glu-289, and Asp-316 each coordinate Mg(2+). Positions 341, 370, 371, and 392 each coordinate (2R)-2-phosphoglycerate. The Proton acceptor role is filled by Lys-341.

Belongs to the enolase family. Mg(2+) is required as a cofactor.

The protein resides in the cytoplasm. It localises to the secreted. The protein localises to the cell surface. It catalyses the reaction (2R)-2-phosphoglycerate = phosphoenolpyruvate + H2O. Its pathway is carbohydrate degradation; glycolysis; pyruvate from D-glyceraldehyde 3-phosphate: step 4/5. In terms of biological role, catalyzes the reversible conversion of 2-phosphoglycerate (2-PG) into phosphoenolpyruvate (PEP). It is essential for the degradation of carbohydrates via glycolysis. This is Enolase from Synechocystis sp. (strain ATCC 27184 / PCC 6803 / Kazusa).